Reading from the N-terminus, the 309-residue chain is Taste receptor type 2 member 46 (309 aa).

Residue Met-1 is a topological domain, extracellular. A helical transmembrane segment spans residues 2–22 (ITFLPIIFSILIVVTFVIGNF). The Cytoplasmic segment spans residues 23–46 (ANGFIALANSIEWFKRQKISFADQ). Residues 47–67 (ILTALAVSRVGLLWVLLLNWY) form a helical membrane-spanning segment. Residues 68–86 (ATELNPAFYSIEVRITAYN) lie on the Extracellular side of the membrane. The helical transmembrane segment at 87–107 (VWAVISHFSNWLATSLSIFYL) threads the bilayer. The Cytoplasmic portion of the chain corresponds to 108–126 (LKIANFSNLIFLRLKRRVK). A helical transmembrane segment spans residues 127 to 147 (SVVLVILLGPLLFLVCHLFVI). Residues 148–178 (NMNQIIWTKEYEGNMTWKIKLRSAMYLSDTT) lie on the Extracellular side of the membrane. Asn-161 carries an N-linked (GlcNAc...) asparagine glycan. Residues 179 to 199 (VTILANLVPFTLTLISFLLLI) form a helical membrane-spanning segment. Residues 200-229 (CSLCKHLKKMQLHGKGSQDPSMKVHIKALQ) are Cytoplasmic-facing. The helical transmembrane segment at 230 to 250 (TVTSFLLLCAIYFLSVIMSVW) threads the bilayer. Over 251–259 (SFESLENKP) the chain is Extracellular. Residues 260-280 (VFMFCEAITFSYPSTHPFILI) traverse the membrane as a helical segment. Residues 281 to 309 (WGNKKLKQTFLSVLWHVRYWVKGEKPSSS) are Cytoplasmic-facing.

Belongs to the G-protein coupled receptor T2R family.

Its subcellular location is the membrane. It localises to the cell projection. The protein localises to the cilium membrane. Its function is as follows. Receptor that may play a role in the perception of bitterness and is gustducin-linked. May play a role in sensing the chemical composition of the gastrointestinal content. The activity of this receptor may stimulate alpha gustducin, mediate PLC-beta-2 activation and lead to the gating of TRPM5. In airway epithelial cells, binding of bitter compounds increases the intracellular calcium ion concentration and stimulates ciliary beat frequency. This Gorilla gorilla gorilla (Western lowland gorilla) protein is Taste receptor type 2 member 46 (TAS2R46).